We begin with the raw amino-acid sequence, 1352 residues long: Ubiquitin carboxyl-terminal hydrolase 31 (1352 aa).

Residues 1–16 (MSKVTAPGSGPPAAAS) are compositionally biased toward low complexity. 2 disordered regions span residues 1-62 (MSKV…RSVG) and 79-119 (SSEG…PPAC). The segment covering 32-43 (RAGGGGAGGPGA) has biased composition (gly residues). Positions 44–62 (SGPAAPSSPSSPSSARSVG) are enriched in low complexity. Residues 95–117 (PPGPAAAPTPPPCPPPPASPAPP) show a composition bias toward pro residues. Residues 128 to 765 (AGLRNHGNTC…TAYILFYQRR (638 aa)) form the USP domain. Cys-137 functions as the Nucleophile in the catalytic mechanism. The disordered stretch occupies residues 162–185 (RAGRPEPSPDPEQPAGRGAQGQGE). Residue His-723 is the Proton acceptor of the active site. Disordered stretches follow at residues 812–835 (LASL…FSTR), 919–939 (SSSY…AVGR), and 951–1352 (DESD…QKPQ). Over residues 958–970 (LNSSVVDTQSKHS) the composition is skewed to polar residues. Composition is skewed to low complexity over residues 992–1001 (VDQSDSVDSS), 1051–1070 (SSLS…SLKP), 1078–1089 (DSSSRGSGRHSS), and 1101–1138 (PKSQ…GPAT). A compositionally biased stretch (basic and acidic residues) spans 1148–1159 (RTSDHSLSREGS). Positions 1160-1181 (RQSLGSDRASATSTSKPNSPRV) are enriched in polar residues. Residues 1198 to 1210 (SSSMASLRSPSTS) are compositionally biased toward low complexity. Composition is skewed to basic and acidic residues over residues 1215-1225 (LKRDSKSEDKG) and 1234-1243 (RQKETRRSTD). Over residues 1251-1264 (SKKAGGSSVKSVCK) the composition is skewed to low complexity. Lys-1264 is subject to N6-acetyllysine. Polar residues-rich tracts occupy residues 1278–1290 (PASQ…TTGK) and 1341–1352 (MQTSARPSQKPQ).

It belongs to the peptidase C19 family. In terms of processing, acetylated at Lys-1264. Acetylation decreases activity. Deacetylated by SIRT1. Widely expressed.

The enzyme catalyses Thiol-dependent hydrolysis of ester, thioester, amide, peptide and isopeptide bonds formed by the C-terminal Gly of ubiquitin (a 76-residue protein attached to proteins as an intracellular targeting signal).. Its function is as follows. Deubiquitinase that recognizes and hydrolyzes the peptide bond at the C-terminal Gly of ubiquitin. May play a role in the regulation of NF-kappa-B signaling pathway by deubiquitinating TRAF2. Functionally, (Microbial infection) Plays a positive role in foot-and-mouth disease and classical swine fever viral infection. Mechanistically, associates with internal ribosomal entry site (IRES) element within the 5'-untranslated region of viral genomes to promote translation of the virus-encoded polyprotein. This Homo sapiens (Human) protein is Ubiquitin carboxyl-terminal hydrolase 31 (USP31).